The following is a 245-amino-acid chain: Probable transcriptional regulatory protein BF2589 (245 aa).

A disordered region spans residues 225–245 (EDEDVQNVYTNMKPADNEGEE).

It belongs to the TACO1 family.

It localises to the cytoplasm. This Bacteroides fragilis (strain ATCC 25285 / DSM 2151 / CCUG 4856 / JCM 11019 / LMG 10263 / NCTC 9343 / Onslow / VPI 2553 / EN-2) protein is Probable transcriptional regulatory protein BF2589.